A 402-amino-acid chain; its full sequence is Arginine biosynthesis bifunctional protein ArgJ (402 aa).

Thr152, Lys178, Thr189, Glu275, Asn397, and Thr402 together coordinate substrate. The active-site Nucleophile is the Thr189.

Belongs to the ArgJ family. Heterotetramer of two alpha and two beta chains.

The protein resides in the cytoplasm. It catalyses the reaction N(2)-acetyl-L-ornithine + L-glutamate = N-acetyl-L-glutamate + L-ornithine. It carries out the reaction L-glutamate + acetyl-CoA = N-acetyl-L-glutamate + CoA + H(+). It participates in amino-acid biosynthesis; L-arginine biosynthesis; L-ornithine and N-acetyl-L-glutamate from L-glutamate and N(2)-acetyl-L-ornithine (cyclic): step 1/1. The protein operates within amino-acid biosynthesis; L-arginine biosynthesis; N(2)-acetyl-L-ornithine from L-glutamate: step 1/4. Its function is as follows. Catalyzes two activities which are involved in the cyclic version of arginine biosynthesis: the synthesis of N-acetylglutamate from glutamate and acetyl-CoA as the acetyl donor, and of ornithine by transacetylation between N(2)-acetylornithine and glutamate. The sequence is that of Arginine biosynthesis bifunctional protein ArgJ from Symbiobacterium thermophilum (strain DSM 24528 / JCM 14929 / IAM 14863 / T).